The chain runs to 251 residues: Isoprenyl transferase (251 aa).

D31 is an active-site residue. A Mg(2+)-binding site is contributed by D31. Residues 32–35 (GNGR), W36, R44, H48, and 76–78 (STE) contribute to the substrate site. N79 functions as the Proton acceptor in the catalytic mechanism. Substrate contacts are provided by residues W80, R82, R199, and 205-207 (RIS). E218 provides a ligand contact to Mg(2+).

Belongs to the UPP synthase family. Homodimer. Mg(2+) is required as a cofactor.

Catalyzes the condensation of isopentenyl diphosphate (IPP) with allylic pyrophosphates generating different type of terpenoids. The sequence is that of Isoprenyl transferase from Thermosynechococcus vestitus (strain NIES-2133 / IAM M-273 / BP-1).